A 176-amino-acid chain; its full sequence is ATP-dependent protease subunit HslV (176 aa).

Thr2 is a catalytic residue. The Na(+) site is built by Gly157, Cys160, and Thr163.

This sequence belongs to the peptidase T1B family. HslV subfamily. As to quaternary structure, a double ring-shaped homohexamer of HslV is capped on each side by a ring-shaped HslU homohexamer. The assembly of the HslU/HslV complex is dependent on binding of ATP.

The protein localises to the cytoplasm. The catalysed reaction is ATP-dependent cleavage of peptide bonds with broad specificity.. Allosterically activated by HslU binding. Functionally, protease subunit of a proteasome-like degradation complex believed to be a general protein degrading machinery. This is ATP-dependent protease subunit HslV from Erwinia tasmaniensis (strain DSM 17950 / CFBP 7177 / CIP 109463 / NCPPB 4357 / Et1/99).